The primary structure comprises 129 residues: uncharacterized protein (129 aa).

This is an uncharacterized protein from Lepidoptera (butterflies and moths).